The following is a 453-amino-acid chain: uncharacterized protein (453 aa).

2 disordered regions span residues leucine 15–methionine 42 and threonine 425–lysine 453. The segment covering threonine 425–alanine 437 has biased composition (polar residues). A compositionally biased stretch (basic residues) spans glutamine 443–lysine 453.

This is an uncharacterized protein from Caenorhabditis elegans.